A 65-amino-acid polypeptide reads, in one-letter code: UPF0434 protein BQ10150 (65 aa).

This sequence belongs to the UPF0434 family.

This Bartonella quintana (strain Toulouse) (Rochalimaea quintana) protein is UPF0434 protein BQ10150.